Reading from the N-terminus, the 493-residue chain is Non-cyanogenic beta-glucosidase (493 aa).

The first 18 residues, 1–18 (MDFIVAIFALFVISSFTI), serve as a signal peptide directing secretion. Asn34 carries an N-linked (GlcNAc...) asparagine glycan. Residues Gln54, His158, and 203–204 (NE) each bind a beta-D-glucoside. Glu204 serves as the catalytic Proton donor. N-linked (GlcNAc...) asparagine glycosylation is present at Asn335. Tyr346 contributes to the a beta-D-glucoside binding site. Asn371 and Asn412 each carry an N-linked (GlcNAc...) asparagine glycan. Residues Glu422, Trp471, 478–479 (EW), and Phe487 each bind a beta-D-glucoside. The Nucleophile role is filled by Glu422.

Belongs to the glycosyl hydrolase 1 family. As to expression, leaves.

It carries out the reaction Hydrolysis of terminal, non-reducing beta-D-glucosyl residues with release of beta-D-glucose.. The polypeptide is Non-cyanogenic beta-glucosidase (Trifolium repens (Creeping white clover)).